Consider the following 388-residue polypeptide: L-cysteine desulfidase (388 aa).

The active-site Proton acceptor is the C25. [4Fe-4S] cluster contacts are provided by C282, C322, and C329.

This sequence belongs to the L-cysteine desulfidase family. Homotrimer. The cofactor is [4Fe-4S] cluster.

The catalysed reaction is L-cysteine + H2O = hydrogen sulfide + pyruvate + NH4(+) + H(+). In terms of biological role, catalyzes the cleavage of L-cysteine to form 2-aminoprop-2-enoate and sulfide. The former then spontaneously hydrolyzes to pyruvate and NH(3). May be responsible for the production of sulfide required for the biosynthesis of iron-sulfur centers in this archaea. Is very specific for L-cysteine, with no activity being detected with D-cysteine, L-homocysteine, 3-mercaptopropionate (cysteine without the amino group), cysteamine (cysteine without the carboxylate), or mercaptolactate (the hydroxyl analog of cysteine). The polypeptide is L-cysteine desulfidase (Methanocaldococcus jannaschii (strain ATCC 43067 / DSM 2661 / JAL-1 / JCM 10045 / NBRC 100440) (Methanococcus jannaschii)).